The sequence spans 459 residues: MKPVETENRKVVVVGLGKSGLATARFLLRRGALVTITDQASEARLGDLVVSARDLGATLELGGHQDSTFLSADYIVVSPGVPETLAPLKKAAEKGIPVMGEMELAARFVTKPVAAVTGTNGKTTVTTLLGDMLKASGRQVFVGGNIGAPLIGFADKGENADMAVVEVSSFQLDTSETFRPHVAVLLNIAEDHLARYVDFNAYVRSKGRIFENQEADDVAVINGADFHVLQASKGIRSRKLTFNAGKNTQDGAVIGDTAVEIVTAGTKTATISVTSPLMRARHNMENIAAATLAALAMGATVEGIQAAVDGFQGLRHRLEYVASIDDVHYFDDSKATNPDAVRRALEFFTSRVVLLLGGEDKGCDYGVLKNVIRERARAVVLFGAAKEKIRMAINGSVSLWDAGSMAEAVRRAHELAAPGDAVLLSPACSSFDSYESYAHRGDDFCNAVKKLKEGDHARG.

118-124 (GTNGKTT) is a binding site for ATP.

It belongs to the MurCDEF family.

The protein resides in the cytoplasm. The enzyme catalyses UDP-N-acetyl-alpha-D-muramoyl-L-alanine + D-glutamate + ATP = UDP-N-acetyl-alpha-D-muramoyl-L-alanyl-D-glutamate + ADP + phosphate + H(+). The protein operates within cell wall biogenesis; peptidoglycan biosynthesis. In terms of biological role, cell wall formation. Catalyzes the addition of glutamate to the nucleotide precursor UDP-N-acetylmuramoyl-L-alanine (UMA). This Desulfosudis oleivorans (strain DSM 6200 / JCM 39069 / Hxd3) (Desulfococcus oleovorans) protein is UDP-N-acetylmuramoylalanine--D-glutamate ligase.